Reading from the N-terminus, the 1207-residue chain is DNA-directed RNA polymerase subunit beta' (1207 aa).

Zn(2+) is bound by residues Cys-60, Cys-62, Cys-75, and Cys-78. The Mg(2+) site is built by Asp-450, Asp-452, and Asp-454. Zn(2+) contacts are provided by Cys-819, Cys-893, Cys-900, and Cys-903.

It belongs to the RNA polymerase beta' chain family. As to quaternary structure, the RNAP catalytic core consists of 2 alpha, 1 beta, 1 beta' and 1 omega subunit. When a sigma factor is associated with the core the holoenzyme is formed, which can initiate transcription. Mg(2+) serves as cofactor. The cofactor is Zn(2+).

The enzyme catalyses RNA(n) + a ribonucleoside 5'-triphosphate = RNA(n+1) + diphosphate. Its function is as follows. DNA-dependent RNA polymerase catalyzes the transcription of DNA into RNA using the four ribonucleoside triphosphates as substrates. The sequence is that of DNA-directed RNA polymerase subunit beta' from Streptococcus pyogenes serotype M3 (strain ATCC BAA-595 / MGAS315).